Reading from the N-terminus, the 2073-residue chain is Histone acetyltransferase KAT6B (2073 aa).

The 77-residue stretch at 1 to 77 (MVKLANPLYT…LASYKDPDNP (77 aa)) folds into the SAMD1-like winged helix (WH) domain. The tract at residues 72-97 (KDPDNPGRFSSVKPGTFPKSAKGSRG) is disordered. The 74-residue stretch at 103-176 (RNVDWNKLLR…KDGPQYRVNY (74 aa)) folds into the H15 domain. PHD-type zinc fingers lie at residues 213–272 (IPIC…CKTC) and 269–320 (CKTC…CRPK). Ser-355 carries the phosphoserine modification. Disordered regions lie at residues 360–409 (EGSM…RPGA), 442–531 (FTPS…VPSL), 553–583 (TQGQSRKKGHPSYAPPKRMRRKTELSSTAKS), and 639–663 (VTPQMGTPSPGKGSLTDGRIKPDQD). The interval 361 to 717 (GSMNAFTGRG…ECESGVEDCG (357 aa)) is negatively regulates HAT activity. The span at 379 to 399 (KVCTTPSSGHAASGKDSSSRL) shows a compositional bias: polar residues. Residues 447–460 (DGRRSRGEIIDFSK) show a composition bias toward basic and acidic residues. Residues 470–485 (QKQSCTSHVLATGTTQ) show a composition bias toward polar residues. Residues 488 to 499 (KPPPSSLPPPTP) show a composition bias toward pro residues. Residues 501 to 531 (SGQSPSSQKSSTATSSPSPQSSSSQCSVPSL) are compositionally biased toward low complexity. Ser-647 bears the Phosphoserine mark. Lys-673 participates in a covalent cross-link: Glycyl lysine isopeptide (Lys-Gly) (interchain with G-Cter in SUMO2). The 275-residue stretch at 715 to 989 (DCGRYPSVIE…LDPDSLRWTP (275 aa)) folds into the MYST-type HAT domain. A catalytic region spans residues 718–1008 (RYPSVIEFGK…EEEREAEKEA (291 aa)). A C2HC MYST-type zinc finger spans residues 748 to 773 (LYLCEFCLKYMKSKNILLRHSKKCGW). Residues 752–1008 (EFCLKYMKSK…EEEREAEKEA (257 aa)) are interaction with BRPF1. The residue at position 815 (Lys-815) is an N6-acetyllysine; by autocatalysis. Acetyl-CoA contacts are provided by residues 856–860 (SCIMI) and 865–871 (QRQGFGR). Glu-891 (proton donor/acceptor) is an active-site residue. Position 895 (Ser-895) interacts with acetyl-CoA. Disordered regions lie at residues 1022–1452 (EQEI…FKEV), 1484–1538 (SCNS…MEID), and 1580–1619 (QSPQIATTLDDCQQSDHSSPVSSVHSHPGQSVRSVNSPSV). The segment covering 1025 to 1043 (ILSTRANSRQSPAKVQSKN) has biased composition (polar residues). N6-acetyllysine is present on residues Lys-1038, Lys-1042, and Lys-1044. Phosphoserine is present on Ser-1048. Over residues 1069 to 1105 (SEEEEEEEDEEEEEEEEEEEEDEEEEEEEEEEEEEEN) the composition is skewed to acidic residues. The segment covering 1106 to 1117 (IQSSPPRLTKPQ) has biased composition (polar residues). The span at 1121-1140 (IKRKRPFVLKKKRGRKRRRI) shows a compositional bias: basic residues. The segment covering 1142–1155 (SSVTTETISETTEV) has biased composition (low complexity). Residues 1187-1200 (PVLRKAFQHQPGKK) are compositionally biased toward basic residues. Composition is skewed to basic and acidic residues over residues 1229-1243 (SNLKEGSKDNPEPLK), 1306-1315 (RIEEEVKETG), and 1341-1350 (EKPEDDLIKP). The segment covering 1351-1374 (EEEEEEEEEEEEEEEEEEGEEEEG) has biased composition (acidic residues). 2 stretches are compositionally biased toward basic and acidic residues: residues 1378-1390 (VEKDPDGAKSQEK) and 1396-1407 (STEKEDSARLDD). The segment covering 1408 to 1417 (HEEEEEEDEE) has biased composition (acidic residues). The segment covering 1433–1452 (HMESAEVEKEELPRESFKEV) has biased composition (basic and acidic residues). The segment covering 1498–1507 (AVPESDEEPP) has biased composition (acidic residues). Residues 1513-1529 (QKQDQKNSKEVDTEFKE) are compositionally biased toward basic and acidic residues. The interaction with RUNX1 and RUNX2 stretch occupies residues 1560 to 2073 (QDCAETQEAC…QSLNGSYMRR (514 aa)). Residues 1580-1591 (QSPQIATTLDDC) show a composition bias toward polar residues. Positions 1594 to 1611 (SDHSSPVSSVHSHPGQSV) are enriched in low complexity.

Belongs to the MYST (SAS/MOZ) family. Component of the MOZ/MORF complex composed at least of ING5, KAT6A, KAT6B, MEAF6 and one of BRPF1, BRD1/BRPF2 and BRPF3. Interacts with RUNX1 and RUNX2. Post-translationally, autoacetylated. Autoacetylation at Lys-815 is required for proper function. In terms of tissue distribution, ubiquitously expressed, with high levels in heart, pancreas, testis and ovary.

Its subcellular location is the nucleus. It catalyses the reaction L-lysyl-[protein] + acetyl-CoA = N(6)-acetyl-L-lysyl-[protein] + CoA + H(+). Functionally, histone acetyltransferase which may be involved in both positive and negative regulation of transcription. Required for RUNX2-dependent transcriptional activation. May be involved in cerebral cortex development. Component of the MOZ/MORF complex which has a histone H3 acetyltransferase activity. The polypeptide is Histone acetyltransferase KAT6B (KAT6B) (Homo sapiens (Human)).